We begin with the raw amino-acid sequence, 313 residues long: PDCD10 and GCKIII kinases-associated protein 1 (313 aa).

The tract at residues Arg40 to Cys89 is disordered. Ser60 and Ser64 each carry phosphoserine. Positions Ser60–Leu73 are enriched in polar residues. Phosphothreonine is present on Thr104. Ser107, Ser237, and Ser240 each carry phosphoserine. The segment at Tyr253 to Val286 is disordered. Residues Gly269–Val285 are compositionally biased toward basic and acidic residues.

Interacts with KEAP1; this interaction prevents the ubiquitination of KEAP1 by TRIM25, thus protecting KEAP1 from degradation. Found in association with PDCD10 and members of the STE20 kinases, such as STK24, STK25 and STK26.

The protein resides in the cell membrane. Acts as a tumor suppressor. Acts as a tumor suppressor for colorectal cancer cell proliferation by targeting KEAP1/USP17/ELK1/CDK6 axis. The protein is PDCD10 and GCKIII kinases-associated protein 1 of Mus musculus (Mouse).